The following is a 1438-amino-acid chain: MDLPPDSRTALRDWLTEQLADLLGEPLADVRALADDDDLLGCGLDSIRLMYLQERLRARGSTLDFAQLAQRPCLGAWLDLLACADRLSAPATVALPTVQDRDQPFELSSVQQAYWLGRGAGEVLGNVSCHAFLEFRTRDVDPQRLAAAAECVRQRHPMLRARFFDGRQQILPTPPLSCFDLQDWRTLQVDEAERDWQALRDWRAHECLAVERGQVFLLGLVRMPGGEDRLWLSLDLLAADVESLRLLLAELGVAYLAPERLAEPPALHFADYLARRAAQRAEAAARARDYWLERLPRLPDAPALPLACAPESIRQPRTRRLAFQLSAGESRRLERLAAQHGVTLSSVFGCAFALVLARWSESAEFLLNVPLFDRHADDPRIGEVIADFTTLLLLECRMQAGVSFAEAVKSFQRNLHGAIDHAAFPALEVLREARRQGQPRSAPVVFASNLGEEGFVPAAFRDAFGDLHDMLSQTPQVWLDHQLYRVGDGILLAWDSVVGLFPEGLPETMFEAYVGLLQRLCDSTWEQPADLPLPWAQQARRALLNGQPACATARTLHRDFFLRAAEAPDADALLYRDQRVTRGELAERALRIAGGLREAGVRPGDAVEVSLPRGPQQVAAVFGVLAAGACYVPLDIDQPPARRRLIEEAAGVCLAITEEDDPQALPPRLDVQRLLRGPALAAPVPLAPQASAYVIYTSGSTGVPKGVEVSHAAAINTIDALLDLLRVDAADRLLAVSALDFDLSVFDLFGGLGAGASLVLPAQEQARDAAAWAEAIQRHAVSLWNSAPALLEMALSLPASQADYRSLRAVLLSGDWVALDLPGRLRPRCAEGCRLHVLGGATEAGIWSNLQSVDTVPPHWRSIPYGRPLPGQAYRVVDAHGRDVPDLVVGELWIGGASLARGYRNDPELSARRFVHDAQGRWYRTGDRGRYWDDGTLEFLGRVDQQVKVRGQRIELGEVEAALCAQAGVESACAAVLGGGVASLGAVLVPRLAPRAEGSMELPAAQPFAGLAEAEAVLTREILGALLEAPLELDDGLRRRWLDWLADSAASALPPLDEALRRLGWQAAGLTAMGNALRGLLAGEQAPAALLLDPWLAPQAVAARLPDGREALARLLEALPTPAAGERLRVAVLDTRAGLWLDQGMASLLRPGLELTLFERSRVLLDAAATRLPERIVVQALDDGLLPAEHLGRYDRVISFAALHAYAASREGLALAAALLRPQGRLLLVDLLCESPLALLGAALLDDRPLRLAELPSLLADLAAAGLAPRCLWRSERIALVEALAPGLGLDAAALQAGLEQRLPQAMRPERLWCLPSLPLNGNGKVDRRRLAESMTRALGECRDEPSAEEPLEAHEQALAECWEAVLKRPVRRREASFFSLGGDSLLATRLLAGIRERFGVRLGMADFYRQPTLAGLARHLQAQTVEIEETQLEEGVL.

A Carrier 1 domain is found at 6–85 (DSRTALRDWL…AWLDLLACAD (80 aa)). Ser46 carries the post-translational modification O-(pantetheine 4'-phosphoryl)serine. The condensation/cyclization stretch occupies residues 136-442 (RTRDVDPQRL…ARRQGQPRSA (307 aa)). Positions 563 to 950 (RAAEAPDADA…GRVDQQVKVR (388 aa)) are adenylation. The 76-residue stretch at 1350–1425 (EPLEAHEQAL…GLARHLQAQT (76 aa)) folds into the Carrier 2 domain. The residue at position 1385 (Ser1385) is an O-(pantetheine 4'-phosphoryl)serine.

The protein belongs to the NRP synthetase family. Pantetheine 4'-phosphate serves as cofactor.

The enzyme catalyses holo-[peptidyl-carrier protein] + L-cysteine + ATP = L-cysteinyl-[peptidyl-carrier protein] + AMP + diphosphate. It functions in the pathway siderophore biosynthesis. Its pathway is antifungal biosynthesis. Its function is as follows. Involved in the biosynthesis of the siderophore pyochelin. Accepts salicylate activated by PchD at the first peptidyl carrier domain (ArCP), and activates and fixes one molecule of cysteine at the second peptidyl carrier domain (PCP1) via a thioester linkage to the phosphopanthetheine moiety. Then catalyzes the condensation reaction between the salicylate bound to the first site and the cysteine bound to the second site, and the cyclization of the cysteine to form the salicyl-thiazolinyl-S-PCP1 intermediate at the second site. When this intermediate is released by the action of a thioesterase, it produces the antifungal antibiotic dihydroaeruginoic acid (Dha or hydroxyphenyl-thiazolinyl-carboxylate). This is Pyochelin synthetase PchE from Pseudomonas aeruginosa (strain UCBPP-PA14).